Consider the following 314-residue polypeptide: Taste receptor type 2 member 42 (314 aa).

At 1-7 the chain is on the extracellular side; sequence MATELDK. Residues 8 to 28 form a helical membrane-spanning segment; that stretch reads IFLILEIAEFIIGMLGNVFIG. Residues 29-50 lie on the Cytoplasmic side of the membrane; the sequence is LVNCSEGIKNQKVFSADFILTC. The chain crosses the membrane as a helical span at residues 51–71; it reads LAISTIGQLFVILFDSFLVGL. Residues 72–101 lie on the Extracellular side of the membrane; sequence ASHLYTTYRLGKPVIMLWHMTNHLTTWLAT. Residues 102 to 122 traverse the membrane as a helical segment; the sequence is CLSIFYFFKIAHFPHSLFLWL. The Cytoplasmic portion of the chain corresponds to 123 to 127; that stretch reads RWRMN. The chain crosses the membrane as a helical span at residues 128-148; it reads GMIVMLLILSLFLLIFNSLVL. Residues 149 to 187 are Extracellular-facing; the sequence is EIFIDISLNIIDKSNLTLYLDESKTVYDKLSILKTLLSL. Residue Asn-163 is glycosylated (N-linked (GlcNAc...) asparagine). A helical transmembrane segment spans residues 188–208; it reads TSFIPFSLSLTSLLFLFLSLV. The Cytoplasmic segment spans residues 209–238; that stretch reads RHTRNLKLSSLGSRDSSTEAHRRAMKMVMS. Residues 239–259 traverse the membrane as a helical segment; it reads FLFLFIVHFFSLQVANWIFFM. Residues 260-265 lie on the Extracellular side of the membrane; that stretch reads LWNNKY. A helical transmembrane segment spans residues 266-286; that stretch reads IKFAMLALNAFPSCHSFILIL. At 287-314 the chain is on the cytoplasmic side; it reads GNSKLRQTAVRLLWHLRNYTKTPNPLPL.

Belongs to the G-protein coupled receptor T2R family.

The protein localises to the membrane. In terms of biological role, receptor that may play a role in the perception of bitterness and is gustducin-linked. May play a role in sensing the chemical composition of the gastrointestinal content. The activity of this receptor may stimulate alpha gustducin, mediate PLC-beta-2 activation and lead to the gating of TRPM5. In Pan troglodytes (Chimpanzee), this protein is Taste receptor type 2 member 42 (TAS2R42).